Here is a 396-residue protein sequence, read N- to C-terminus: Elongation factor Tu (396 aa).

The 197-residue stretch at 10-206 (KPHVNIGTIG…AVDEYIPDPV (197 aa)) folds into the tr-type G domain. The G1 stretch occupies residues 19–26 (GHVDHGKT). 19 to 26 (GHVDHGKT) is a GTP binding site. Residue T26 participates in Mg(2+) binding. The interval 62-66 (GITIN) is G2. Positions 83–86 (DAPG) are G3. Residues 83–87 (DAPGH) and 138–141 (NKSD) each bind GTP. Residues 138–141 (NKSD) are G4. The G5 stretch occupies residues 176-178 (SGL).

It belongs to the TRAFAC class translation factor GTPase superfamily. Classic translation factor GTPase family. EF-Tu/EF-1A subfamily. Monomer.

The protein localises to the cytoplasm. It carries out the reaction GTP + H2O = GDP + phosphate + H(+). In terms of biological role, GTP hydrolase that promotes the GTP-dependent binding of aminoacyl-tRNA to the A-site of ribosomes during protein biosynthesis. The protein is Elongation factor Tu of Micrococcus luteus (strain ATCC 4698 / DSM 20030 / JCM 1464 / CCM 169 / CCUG 5858 / IAM 1056 / NBRC 3333 / NCIMB 9278 / NCTC 2665 / VKM Ac-2230) (Micrococcus lysodeikticus).